Consider the following 428-residue polypeptide: MVVKVEKKDKNIVELEIEVEAAKFEEAVQKSYLKNSKKFTVPGFRKGKAPRSIIERYYGKEVFYEDAINIVCADAYDKAIEENDIFPVDRPTISIKKIGEGENLVFTASVTVKPEVELGEYKGVEVEKVEVNVTDEDVEKELKAVAEKNARIMSVEDRGIQKGDIVDIDFEGFIDGEPFEGGKASGYVLEVGSGTFIDGFEDQLIGGRPGDDIEVNVTFPEDYGKKELAGKPALFKVIVNDVKVKELPAIDDEFAKDVSEFDTLEEYKESIRKKLTEAAEHRAKHELEDKVVAKVVENAQVDIPDVMIERQIDSMVRDYNMRLNYQGLDLDKYLMIMGIDYQTFRNQLRDRAHDDIKRQLVLEKVAKVEDIKVSDEEINEEAEKIAKSYNMEHEDFKKHLRDDDIEYIKATILFKKAVDFLVQNAKIL.

In terms of domain architecture, PPIase FKBP-type spans 163 to 248; the sequence is GDIVDIDFEG…VNDVKVKELP (86 aa).

Belongs to the FKBP-type PPIase family. Tig subfamily.

The protein localises to the cytoplasm. It catalyses the reaction [protein]-peptidylproline (omega=180) = [protein]-peptidylproline (omega=0). In terms of biological role, involved in protein export. Acts as a chaperone by maintaining the newly synthesized protein in an open conformation. Functions as a peptidyl-prolyl cis-trans isomerase. The polypeptide is Trigger factor (Acetivibrio thermocellus (strain ATCC 27405 / DSM 1237 / JCM 9322 / NBRC 103400 / NCIMB 10682 / NRRL B-4536 / VPI 7372) (Clostridium thermocellum)).